A 428-amino-acid polypeptide reads, in one-letter code: Glutamyl-tRNA reductase (428 aa).

Residues 49-52, S109, 114-116, and Q120 each bind substrate; these read TCNR and EGQ. The Nucleophile role is filled by C50. 189 to 194 serves as a coordination point for NADP(+); that stretch reads GAGKMA.

The protein belongs to the glutamyl-tRNA reductase family. As to quaternary structure, homodimer.

It carries out the reaction (S)-4-amino-5-oxopentanoate + tRNA(Glu) + NADP(+) = L-glutamyl-tRNA(Glu) + NADPH + H(+). It functions in the pathway porphyrin-containing compound metabolism; protoporphyrin-IX biosynthesis; 5-aminolevulinate from L-glutamyl-tRNA(Glu): step 1/2. The protein operates within porphyrin-containing compound metabolism; chlorophyll biosynthesis. In terms of biological role, catalyzes the NADPH-dependent reduction of glutamyl-tRNA(Glu) to glutamate 1-semialdehyde (GSA). The polypeptide is Glutamyl-tRNA reductase (Rippkaea orientalis (strain PCC 8801 / RF-1) (Cyanothece sp. (strain PCC 8801))).